A 317-amino-acid chain; its full sequence is Ribosomal protein L11 methyltransferase (317 aa).

Thr-162, Gly-183, Asp-205, and Asn-248 together coordinate S-adenosyl-L-methionine.

Belongs to the methyltransferase superfamily. PrmA family.

The protein resides in the cytoplasm. It catalyses the reaction L-lysyl-[protein] + 3 S-adenosyl-L-methionine = N(6),N(6),N(6)-trimethyl-L-lysyl-[protein] + 3 S-adenosyl-L-homocysteine + 3 H(+). Methylates ribosomal protein L11. This Alkaliphilus metalliredigens (strain QYMF) protein is Ribosomal protein L11 methyltransferase.